We begin with the raw amino-acid sequence, 285 residues long: Glycine--tRNA ligase alpha subunit (285 aa).

It belongs to the class-II aminoacyl-tRNA synthetase family. As to quaternary structure, tetramer of two alpha and two beta subunits.

The protein localises to the cytoplasm. The catalysed reaction is tRNA(Gly) + glycine + ATP = glycyl-tRNA(Gly) + AMP + diphosphate. The protein is Glycine--tRNA ligase alpha subunit of Thermodesulfovibrio yellowstonii (strain ATCC 51303 / DSM 11347 / YP87).